We begin with the raw amino-acid sequence, 504 residues long: Cytochrome P450 2D9 (504 aa).

Residue Ser-249 is modified to Phosphoserine. Cys-446 contributes to the heme binding site.

The protein belongs to the cytochrome P450 family. The cofactor is heme.

The protein localises to the endoplasmic reticulum membrane. It is found in the microsome membrane. It catalyses the reaction an organic molecule + reduced [NADPH--hemoprotein reductase] + O2 = an alcohol + oxidized [NADPH--hemoprotein reductase] + H2O + H(+). In terms of biological role, cytochromes P450 are a group of heme-thiolate monooxygenases. In liver microsomes, this enzyme is involved in an NADPH-dependent electron transport pathway. It oxidizes a variety of structurally unrelated compounds, including steroids, fatty acids, and xenobiotics. The protein is Cytochrome P450 2D9 (Cyp2d9) of Mus musculus (Mouse).